The sequence spans 579 residues: ATP-dependent lipid A-core flippase (579 aa).

The next 4 helical transmembrane spans lie at 24–44 (FLAA…LAEM), 61–81 (LMLP…TFLG), 147–167 (LFVI…TLIF), and 253–273 (LLVA…ALMA). An ABC transmembrane type-1 domain is found at 25–306 (LAAVVGYAIY…LTEVNSTIQK (282 aa)). The region spanning 338 to 573 (VRFEGVRFRY…DGAYAALHQL (236 aa)) is the ABC transporter domain. Residue 372 to 379 (GRSGSGKS) participates in ATP binding.

Belongs to the ABC transporter superfamily. Lipid exporter (TC 3.A.1.106) family. Homodimer.

It localises to the cell inner membrane. It catalyses the reaction ATP + H2O + lipid A-core oligosaccharideSide 1 = ADP + phosphate + lipid A-core oligosaccharideSide 2.. Involved in lipopolysaccharide (LPS) biosynthesis. Translocates lipid A-core from the inner to the outer leaflet of the inner membrane. Transmembrane domains (TMD) form a pore in the inner membrane and the ATP-binding domain (NBD) is responsible for energy generation. This is ATP-dependent lipid A-core flippase from Chromohalobacter salexigens (strain ATCC BAA-138 / DSM 3043 / CIP 106854 / NCIMB 13768 / 1H11).